The following is a 462-amino-acid chain: Probable threonine/serine transporter YbxG (462 aa).

Transmembrane regions (helical) follow at residues 17–37, 38–58, 89–109, 121–141, 154–174, 190–210, 238–258, 276–296, 331–351, 355–375, 398–418, and 427–447; these read MIAL…STIS, WTGP…FFIM, ITAW…IIAV, PAWI…LISV, IKIV…FFGF, GGFF…VIAA, IIWR…TVYP, IGIT…AMSG, LYGT…NYIA, IFVY…FIIL, FAPF…VGMW, and LIVG…FGIG.

This sequence belongs to the amino acid-polyamine-organocation (APC) superfamily.

It localises to the cell membrane. In terms of biological role, probable threonine transporter. Is also active as a minor serine permease. This chain is Probable threonine/serine transporter YbxG (ybxG), found in Bacillus subtilis (strain 168).